Here is an 832-residue protein sequence, read N- to C-terminus: Histone acetyltransferase KAT2B (832 aa).

A compositionally biased stretch (gly residues) spans 1-22 (MSEAGGAGPGGCGAGAGAGAGP). 2 disordered regions span residues 1-54 (MSEA…ACGP) and 395-436 (SYNS…DSHV). Residues 24 to 39 (ALPPQPAALPPAPPQG) show a composition bias toward pro residues. Over residues 40–54 (SPCAAAAGGSGACGP) the composition is skewed to low complexity. A compositionally biased stretch (polar residues) spans 395-413 (SYNSTSSSLEQPNAGSSSP). Basic and acidic residues predominate over residues 425-436 (PGEKRKMTDSHV). The N-acetyltransferase domain maps to 503–651 (LNQKPNKKIL…GATLMGCELN (149 aa)). Glu-570 acts as the Proton donor/acceptor in catalysis. Acetyl-CoA is bound by residues 574 to 576 (CAV), 581 to 587 (QVKGYGT), and 612 to 615 (YAIG). A disordered region spans residues 706–725 (IRETGWKPSGKEKSKEPRDP). Residues 714-725 (SGKEKSKEPRDP) are compositionally biased toward basic and acidic residues. The region spanning 723 to 827 (RDPDQLYSTL…KFFFSKIKEA (105 aa)) is the Bromo domain.

This sequence belongs to the acetyltransferase family. GCN5 subfamily. In terms of assembly, interacts with SIRT1. Interacts (unsumoylated form) with NR2C1; the interaction promotes transactivation activity. Interacts with EP300, CREBBP and DDX17. Interacts with NCOA1 and NCOA3. Component of a large chromatin remodeling complex, at least composed of MYSM1, KAT2B/PCAF, RBM10 and KIF11/TRIP5. Interacts with NR2C2 (hypophosphorylated and unsumoylated form); the interaction promotes the transactivation activity of NR2C2. Interacts with KLF1; the interaction does not acetylate KLF1 and there is no enhancement of its transactivational activity. Interacts with NFE4. Interacts with MECOM. Interacts with E2F1; the interaction acetylates E2F1 augmenting its DNA-binding and transcriptional activity. Interacts with NPAS2, BMAL1 and CLOCK. Interacts with BCAS3. Interacts with CEBPB. Interacts with NR4A3. Interacts with NFATC2. Interacts with TBX5. Interacts with PLK4. Interacts with RB1; this interaction leads to RB1 acetylation. Interacts with VRK1. (Microbial infection) Interacts with and acetylates HIV-1 Tat. As to quaternary structure, (Microbial infection) Interacts with HTLV-1 Tax. As to expression, ubiquitously expressed but most abundant in heart and skeletal muscle. Also expressed in the skin, in keratinocytes (at protein level).

It is found in the nucleus. The protein resides in the cytoplasm. It localises to the cytoskeleton. The protein localises to the microtubule organizing center. Its subcellular location is the centrosome. It catalyses the reaction L-lysyl-[histone] + acetyl-CoA = N(6)-acetyl-L-lysyl-[histone] + CoA + H(+). The catalysed reaction is L-lysyl-[protein] + acetyl-CoA = N(6)-acetyl-L-lysyl-[protein] + CoA + H(+). It carries out the reaction spermidine + acetyl-CoA = N(8)-acetylspermidine + CoA + H(+). Activated in vitro by very low concentrations of spermidine, but inhibited at spermidine concentrations higher than 4 uM. The activating effect of low spermidine concentrations may be mediated by N(8)-acetylspermidine produced by KAT2B/P/CAF itself acting as a positive feedback loop. Functions as a histone acetyltransferase (HAT) to promote transcriptional activation. Has significant histone acetyltransferase activity with core histones (H3 and H4), and also with nucleosome core particles. Has a a strong preference for acetylation of H3 at 'Lys-9' (H3K9ac). Also acetylates non-histone proteins, such as ACLY, MAPRE1/EB1, PLK4, RRP9/U3-55K and TBX5. Inhibits cell-cycle progression and counteracts the mitogenic activity of the adenoviral oncoprotein E1A. Acts as a circadian transcriptional coactivator which enhances the activity of the circadian transcriptional activators: NPAS2-BMAL1 and CLOCK-BMAL1 heterodimers. Involved in heart and limb development by mediating acetylation of TBX5, acetylation regulating nucleocytoplasmic shuttling of TBX5. Acts as a negative regulator of centrosome amplification by mediating acetylation of PLK4. Acetylates RRP9/U3-55K, a core subunit of the U3 snoRNP complex, impairing pre-rRNA processing. Acetylates MAPRE1/EB1, promoting dynamic kinetochore-microtubule interactions in early mitosis. Also acetylates spermidine. Functionally, (Microbial infection) In case of HIV-1 infection, it is recruited by the viral protein Tat. Regulates Tat's transactivating activity and may help inducing chromatin remodeling of proviral genes. This chain is Histone acetyltransferase KAT2B, found in Homo sapiens (Human).